Consider the following 94-residue polypeptide: Cyclin-dependent kinases regulatory subunit (94 aa).

The protein belongs to the CKS family. Forms a homohexamer that can probably bind six kinase subunits. Interacts with cdk-1.

The protein localises to the nucleus. Functionally, binds to the catalytic subunit of the cyclin dependent kinases and is essential for their biological function. Has a role in the exit from M phase during early mitotic cell division. More specifically, thought to act by degrading B-type cyclins that causes breakdown of nuclear envelope and exit mitosis. In Caenorhabditis elegans, this protein is Cyclin-dependent kinases regulatory subunit (cks-1).